Consider the following 533-residue polypeptide: Glucose-6-phosphate isomerase (533 aa).

E330 serves as the catalytic Proton donor. Residues H359 and K461 contribute to the active site.

This sequence belongs to the GPI family.

The protein resides in the cytoplasm. The enzyme catalyses alpha-D-glucose 6-phosphate = beta-D-fructose 6-phosphate. Its pathway is carbohydrate biosynthesis; gluconeogenesis. The protein operates within carbohydrate degradation; glycolysis; D-glyceraldehyde 3-phosphate and glycerone phosphate from D-glucose: step 2/4. In terms of biological role, catalyzes the reversible isomerization of glucose-6-phosphate to fructose-6-phosphate. The chain is Glucose-6-phosphate isomerase from Prochlorococcus marinus (strain SARG / CCMP1375 / SS120).